We begin with the raw amino-acid sequence, 342 residues long: Holliday junction branch migration complex subunit RuvB (342 aa).

Positions 1-184 are large ATPase domain (RuvB-L); it reads MEENFDIREQ…FGINLHLEYY (184 aa). ATP contacts are provided by residues L23, R24, G65, K68, T69, T70, 131–133, R174, Y184, and R221; that span reads EDY. T69 is a binding site for Mg(2+). The tract at residues 185–255 is small ATPAse domain (RuvB-S); the sequence is DDDVLTSIIR…IARFALEALN (71 aa). The segment at 258-342 is head domain (RuvB-H); that stretch reads RYGLDEIDNK…YNSQKTLFDD (85 aa). DNA is bound by residues R313 and R318.

The protein belongs to the RuvB family. Homohexamer. Forms an RuvA(8)-RuvB(12)-Holliday junction (HJ) complex. HJ DNA is sandwiched between 2 RuvA tetramers; dsDNA enters through RuvA and exits via RuvB. An RuvB hexamer assembles on each DNA strand where it exits the tetramer. Each RuvB hexamer is contacted by two RuvA subunits (via domain III) on 2 adjacent RuvB subunits; this complex drives branch migration. In the full resolvosome a probable DNA-RuvA(4)-RuvB(12)-RuvC(2) complex forms which resolves the HJ.

Its subcellular location is the cytoplasm. The catalysed reaction is ATP + H2O = ADP + phosphate + H(+). The RuvA-RuvB-RuvC complex processes Holliday junction (HJ) DNA during genetic recombination and DNA repair, while the RuvA-RuvB complex plays an important role in the rescue of blocked DNA replication forks via replication fork reversal (RFR). RuvA specifically binds to HJ cruciform DNA, conferring on it an open structure. The RuvB hexamer acts as an ATP-dependent pump, pulling dsDNA into and through the RuvAB complex. RuvB forms 2 homohexamers on either side of HJ DNA bound by 1 or 2 RuvA tetramers; 4 subunits per hexamer contact DNA at a time. Coordinated motions by a converter formed by DNA-disengaged RuvB subunits stimulates ATP hydrolysis and nucleotide exchange. Immobilization of the converter enables RuvB to convert the ATP-contained energy into a lever motion, pulling 2 nucleotides of DNA out of the RuvA tetramer per ATP hydrolyzed, thus driving DNA branch migration. The RuvB motors rotate together with the DNA substrate, which together with the progressing nucleotide cycle form the mechanistic basis for DNA recombination by continuous HJ branch migration. Branch migration allows RuvC to scan DNA until it finds its consensus sequence, where it cleaves and resolves cruciform DNA. The protein is Holliday junction branch migration complex subunit RuvB of Phocaeicola vulgatus (strain ATCC 8482 / DSM 1447 / JCM 5826 / CCUG 4940 / NBRC 14291 / NCTC 11154) (Bacteroides vulgatus).